The chain runs to 252 residues: Ribosomal RNA small subunit methyltransferase J (252 aa).

S-adenosyl-L-methionine contacts are provided by residues 101–102, 117–118, 153–154, and D171; these read RD, ER, and SS.

This sequence belongs to the methyltransferase superfamily. RsmJ family.

Its subcellular location is the cytoplasm. It catalyses the reaction guanosine(1516) in 16S rRNA + S-adenosyl-L-methionine = N(2)-methylguanosine(1516) in 16S rRNA + S-adenosyl-L-homocysteine + H(+). Functionally, specifically methylates the guanosine in position 1516 of 16S rRNA. The protein is Ribosomal RNA small subunit methyltransferase J of Pseudoalteromonas translucida (strain TAC 125).